A 200-amino-acid chain; its full sequence is MPEALQELAAHVRMRQPDAILGHRVEFGELTLDVVPNRIVGLVEFLRSDASCRFSSLVDITAIDHPERPARFDVVYHFLSMYQNQRIRLKMQVREDETVASIHSVHPSANWFEREVFDMFGILFTGHPDLRRILTDYGFRGHPMRKDFPTTGYTEVRYDEVQKRVVYEPVKLVQEYRQFDFLSPWEGADYILPGDDKART.

This sequence belongs to the complex I 30 kDa subunit family. In terms of assembly, NDH-1 is composed of 14 different subunits. Subunits NuoB, C, D, E, F, and G constitute the peripheral sector of the complex.

The protein localises to the cell inner membrane. It catalyses the reaction a quinone + NADH + 5 H(+)(in) = a quinol + NAD(+) + 4 H(+)(out). Its function is as follows. NDH-1 shuttles electrons from NADH, via FMN and iron-sulfur (Fe-S) centers, to quinones in the respiratory chain. The immediate electron acceptor for the enzyme in this species is believed to be ubiquinone. Couples the redox reaction to proton translocation (for every two electrons transferred, four hydrogen ions are translocated across the cytoplasmic membrane), and thus conserves the redox energy in a proton gradient. The sequence is that of NADH-quinone oxidoreductase subunit C from Cereibacter sphaeroides (strain ATCC 17029 / ATH 2.4.9) (Rhodobacter sphaeroides).